Here is a 155-residue protein sequence, read N- to C-terminus: Cytochrome c-type biogenesis protein CcmE (155 aa).

Residues 1 to 8 (MNPLRKKR) lie on the Cytoplasmic side of the membrane. A helical; Signal-anchor for type II membrane protein membrane pass occupies residues 9–29 (LLIIAALLAGVGLAMTLALGA). Residues 30–155 (LKENINLFYT…GGSSTPAKQG (126 aa)) lie on the Periplasmic side of the membrane. His-124 and Tyr-128 together coordinate heme. Positions 134-155 (TKALRDSGQAAPGGSSTPAKQG) are disordered.

This sequence belongs to the CcmE/CycJ family.

Its subcellular location is the cell inner membrane. Heme chaperone required for the biogenesis of c-type cytochromes. Transiently binds heme delivered by CcmC and transfers the heme to apo-cytochromes in a process facilitated by CcmF and CcmH. The polypeptide is Cytochrome c-type biogenesis protein CcmE (Pseudomonas savastanoi pv. phaseolicola (strain 1448A / Race 6) (Pseudomonas syringae pv. phaseolicola (strain 1448A / Race 6))).